The primary structure comprises 146 residues: Small ribosomal subunit protein uS9 (146 aa).

S3 bears the Phosphoserine mark. Residue K60 is modified to N6-acetyllysine.

This sequence belongs to the universal ribosomal protein uS9 family. Component of the small ribosomal subunit. Part of the small subunit (SSU) processome, composed of more than 70 proteins and the RNA chaperone small nucleolar RNA (snoRNA) U3.

The protein resides in the cytoplasm. It localises to the nucleus. It is found in the nucleolus. Its function is as follows. Component of the small ribosomal subunit. The ribosome is a large ribonucleoprotein complex responsible for the synthesis of proteins in the cell. Part of the small subunit (SSU) processome, first precursor of the small eukaryotic ribosomal subunit. During the assembly of the SSU processome in the nucleolus, many ribosome biogenesis factors, an RNA chaperone and ribosomal proteins associate with the nascent pre-rRNA and work in concert to generate RNA folding, modifications, rearrangements and cleavage as well as targeted degradation of pre-ribosomal RNA by the RNA exosome. This is Small ribosomal subunit protein uS9 (RPS16) from Bos taurus (Bovine).